The primary structure comprises 253 residues: Putative B3 domain-containing protein Os03g0619850 (253 aa).

A DNA-binding region (TF-B3) is located at residues 26 to 119 (MSCFLIRMTT…CFEVMILDSD (94 aa)). Disordered stretches follow at residues 126 to 150 (LKSNRNGVSDESQESEDSEGPAGPP) and 230 to 253 (HRDADQERQMHHQAVPDQWLEQDS). Basic and acidic residues predominate over residues 230-239 (HRDADQERQM).

The protein localises to the nucleus. The chain is Putative B3 domain-containing protein Os03g0619850 from Oryza sativa subsp. japonica (Rice).